Consider the following 346-residue polypeptide: Alkylated DNA repair protein ALKBH8 homolog (346 aa).

The segment at 1–21 is disordered; that stretch reads MVQPRFVRPTQSSPSSISGEP. Residues 12-21 show a composition bias toward low complexity; the sequence is SSPSSISGEP. The region spanning 24-102 is the RRM domain; it reads SNLYVANCGP…RSLHIRYSVL (79 aa). The region spanning 208–328 is the Fe2OG dioxygenase domain; that stretch reads NLDQLTVNEY…RVSFTLRKVR (121 aa). The Fe cation site is built by H226, D228, and H298. 2 residues coordinate 2-oxoglutarate: R319 and R325.

Belongs to the alkB family. Fe(2+) is required as a cofactor.

In terms of biological role, binds tRNA and catalyzes the iron and alpha-ketoglutarate dependent hydroxylation of 5-methylcarboxymethyl uridine at the wobble position of the anticodon loop in tRNA via its dioxygenase domain, giving rise to 5-(S)-methoxycarbonylhydroxymethyluridine. The polypeptide is Alkylated DNA repair protein ALKBH8 homolog (Arabidopsis thaliana (Mouse-ear cress)).